Consider the following 616-residue polypeptide: Ectonucleoside triphosphate diphosphohydrolase 4 (616 aa).

Residues 1–33 (MGRIGISCLFPASWHFSISPVGCPRILNTNLRQ) are Cytoplasmic-facing. The helical transmembrane segment at 34-54 (IMVISVLAAAVSLLYFSVVII) threads the bilayer. At 55–559 (RNKYGRLTRD…ASHTHWRGVS (505 aa)) the chain is on the lumenal side. Glu-222 functions as the Proton acceptor in the catalytic mechanism. Cys-368 and Cys-395 are disulfide-bonded. N-linked (GlcNAc...) asparagine glycans are attached at residues Asn-404 and Asn-407. Cys-461 and Cys-490 are joined by a disulfide. Residues 560–580 (FVYNHYLFSGCFLVVLLAILL) form a helical membrane-spanning segment. At 581–616 (YLLRLRRIHRRTPRSSSAAALWMEEGLPAQNAPGTL) the chain is on the cytoplasmic side.

This sequence belongs to the GDA1/CD39 NTPase family. Requires Ca(2+) as cofactor. It depends on Mg(2+) as a cofactor. As to expression, ubiquitous. Highest expression in testis and lowest in bladder.

The protein resides in the cytoplasmic vesicle. Its subcellular location is the autophagosome membrane. The protein localises to the lysosome membrane. It localises to the golgi apparatus membrane. It carries out the reaction a ribonucleoside 5'-diphosphate + H2O = a ribonucleoside 5'-phosphate + phosphate + H(+). It catalyses the reaction a ribonucleoside 5'-triphosphate + H2O = a ribonucleoside 5'-diphosphate + phosphate + H(+). The catalysed reaction is UDP + H2O = UMP + phosphate + H(+). The enzyme catalyses UTP + H2O = UDP + phosphate + H(+). It carries out the reaction CTP + H2O = CDP + phosphate + H(+). It catalyses the reaction GDP + H2O = GMP + phosphate + H(+). The catalysed reaction is GTP + H2O = GDP + phosphate + H(+). The enzyme catalyses 5-methyl-UTP + H2O = 5-methyl-UDP + phosphate + H(+). Its function is as follows. Catalyzes the hydrolysis of nucleoside triphosphates and diphosphates in a calcium- or magnesium-dependent manner, with a preference for pyrimidines. Preferentially hydrolyzes UTP and TTP. AMP, ADP, ATP and UMP are not substrates. Preferentially activated by Ca(2+) over Mg(2+). Has a broad substrate specificity with the ability of cleaving all nucleotide di- and triphosphates with the exception of adenosine di- and triphosphate (ADP and ATP). Preferentially hydrolyzes CTP, UDP, CDP, GTP and GDP. Can use either Ca(2+) or Mg(2+) equally. The polypeptide is Ectonucleoside triphosphate diphosphohydrolase 4 (Homo sapiens (Human)).